Here is a 424-residue protein sequence, read N- to C-terminus: UDP-N-acetylglucosamine 1-carboxyvinyltransferase (424 aa).

22–23 (KN) contacts phosphoenolpyruvate. UDP-N-acetyl-alpha-D-glucosamine is bound at residue arginine 93. The Proton donor role is filled by cysteine 117. A 2-(S-cysteinyl)pyruvic acid O-phosphothioketal modification is found at cysteine 117. UDP-N-acetyl-alpha-D-glucosamine-binding positions include 122–126 (RPVDL), aspartate 307, and isoleucine 329.

Belongs to the EPSP synthase family. MurA subfamily.

The protein resides in the cytoplasm. It catalyses the reaction phosphoenolpyruvate + UDP-N-acetyl-alpha-D-glucosamine = UDP-N-acetyl-3-O-(1-carboxyvinyl)-alpha-D-glucosamine + phosphate. It participates in cell wall biogenesis; peptidoglycan biosynthesis. In terms of biological role, cell wall formation. Adds enolpyruvyl to UDP-N-acetylglucosamine. This chain is UDP-N-acetylglucosamine 1-carboxyvinyltransferase, found in Chlorobaculum parvum (strain DSM 263 / NCIMB 8327) (Chlorobium vibrioforme subsp. thiosulfatophilum).